The following is a 427-amino-acid chain: Peptidase B (427 aa).

Mn(2+) contacts are provided by Lys195 and Asp200. Lys207 is a catalytic residue. Positions 218, 277, and 279 each coordinate Mn(2+). Arg281 is an active-site residue.

It belongs to the peptidase M17 family. As to quaternary structure, homohexamer. Mn(2+) serves as cofactor.

Its subcellular location is the cytoplasm. The enzyme catalyses Release of an N-terminal amino acid, Xaa, from a peptide or arylamide. Xaa is preferably Glu or Asp but may be other amino acids, including Leu, Met, His, Cys and Gln.. In terms of biological role, probably plays an important role in intracellular peptide degradation. This chain is Peptidase B, found in Shigella boydii serotype 18 (strain CDC 3083-94 / BS512).